Reading from the N-terminus, the 186-residue chain is Elongation factor P (186 aa).

It belongs to the elongation factor P family.

It localises to the cytoplasm. It participates in protein biosynthesis; polypeptide chain elongation. Involved in peptide bond synthesis. Stimulates efficient translation and peptide-bond synthesis on native or reconstituted 70S ribosomes in vitro. Probably functions indirectly by altering the affinity of the ribosome for aminoacyl-tRNA, thus increasing their reactivity as acceptors for peptidyl transferase. The chain is Elongation factor P from Mycoplasmopsis synoviae (strain 53) (Mycoplasma synoviae).